A 281-amino-acid polypeptide reads, in one-letter code: Cytochrome c oxidase subunit 3 (281 aa).

The Mitochondrial matrix portion of the chain corresponds to 1-15 (MTHQTHAYHMVNPSP). A helical membrane pass occupies residues 16-34 (WPLTGALSALLLTSGLIMW). Residues 35 to 40 (FHYNSS) lie on the Mitochondrial intermembrane side of the membrane. The chain crosses the membrane as a helical span at residues 41–66 (TLMFMGLTTMLLTMYQWWRDIIREGT). Residues 67–72 (FQGHHT) are Mitochondrial matrix-facing. Residues 73-105 (PVVQKGLRYGMILFILSEVFFFIGFFWAFYHSS) traverse the membrane as a helical segment. The Mitochondrial intermembrane segment spans residues 106–128 (LAPTPELGGCWPPTGIHPLNPLE). A helical transmembrane segment spans residues 129–152 (VPLLNTSILLASGVSITWAHHSLM). The Mitochondrial matrix segment spans residues 153–155 (EGN). The helical transmembrane segment at 156-183 (RKQMIQALLITISLGLYFTILQAMEYYE) threads the bilayer. Residues 184–190 (ASFTISD) lie on the Mitochondrial intermembrane side of the membrane. Residues 191-223 (GVYGSTFFVATGFHGLHVIIGSTFLIVCLLRQL) form a helical membrane-spanning segment. Residues 224–232 (FYHFTSTHH) are Mitochondrial matrix-facing. Residues 233-256 (FGFEAAAWYWHFVDVVWLFLYVSI) traverse the membrane as a helical segment. Residues 257–281 (YWWGSYFSSMISTTDFQSLSSGSNQ) are Mitochondrial intermembrane-facing.

This sequence belongs to the cytochrome c oxidase subunit 3 family. In terms of assembly, component of the cytochrome c oxidase (complex IV, CIV), a multisubunit enzyme composed of 14 subunits. The complex is composed of a catalytic core of 3 subunits MT-CO1, MT-CO2 and MT-CO3, encoded in the mitochondrial DNA, and 11 supernumerary subunits COX4I, COX5A, COX5B, COX6A, COX6B, COX6C, COX7A, COX7B, COX7C, COX8 and NDUFA4, which are encoded in the nuclear genome. The complex exists as a monomer or a dimer and forms supercomplexes (SCs) in the inner mitochondrial membrane with NADH-ubiquinone oxidoreductase (complex I, CI) and ubiquinol-cytochrome c oxidoreductase (cytochrome b-c1 complex, complex III, CIII), resulting in different assemblies (supercomplex SCI(1)III(2)IV(1) and megacomplex MCI(2)III(2)IV(2)).

The protein resides in the mitochondrion inner membrane. The enzyme catalyses 4 Fe(II)-[cytochrome c] + O2 + 8 H(+)(in) = 4 Fe(III)-[cytochrome c] + 2 H2O + 4 H(+)(out). Component of the cytochrome c oxidase, the last enzyme in the mitochondrial electron transport chain which drives oxidative phosphorylation. The respiratory chain contains 3 multisubunit complexes succinate dehydrogenase (complex II, CII), ubiquinol-cytochrome c oxidoreductase (cytochrome b-c1 complex, complex III, CIII) and cytochrome c oxidase (complex IV, CIV), that cooperate to transfer electrons derived from NADH and succinate to molecular oxygen, creating an electrochemical gradient over the inner membrane that drives transmembrane transport and the ATP synthase. Cytochrome c oxidase is the component of the respiratory chain that catalyzes the reduction of oxygen to water. Electrons originating from reduced cytochrome c in the intermembrane space (IMS) are transferred via the dinuclear copper A center (CU(A)) of subunit 2 and heme A of subunit 1 to the active site in subunit 1, a binuclear center (BNC) formed by heme A3 and copper B (CU(B)). The BNC reduces molecular oxygen to 2 water molecules using 4 electrons from cytochrome c in the IMS and 4 protons from the mitochondrial matrix. This Didelphis virginiana (North American opossum) protein is Cytochrome c oxidase subunit 3 (MT-CO3).